Consider the following 488-residue polypeptide: N-acyl-D-glutamate deacylase (488 aa).

It belongs to the metallo-dependent hydrolases superfamily. N-acyl-D-amino-acid deacylase family. Requires Zn(2+) as cofactor.

It localises to the cytoplasm. It carries out the reaction an N-acyl-D-glutamate + H2O = D-glutamate + a carboxylate. With respect to regulation, inhibited by cobalt, copper and EDTA. In Alcaligenes xylosoxydans xylosoxydans (Achromobacter xylosoxidans), this protein is N-acyl-D-glutamate deacylase.